Here is a 163-residue protein sequence, read N- to C-terminus: Ribonuclease P protein component (163 aa).

Positions 1–68 are disordered; sequence MDEKDVATQP…GGKLLSLKGD (68 aa). Positions 8–19 are enriched in polar residues; the sequence is TQPQETGQNPRL.

The protein belongs to the RnpA family. In terms of assembly, consists of a catalytic RNA component (M1 or rnpB) and a protein subunit.

The catalysed reaction is Endonucleolytic cleavage of RNA, removing 5'-extranucleotides from tRNA precursor.. Its function is as follows. RNaseP catalyzes the removal of the 5'-leader sequence from pre-tRNA to produce the mature 5'-terminus. It can also cleave other RNA substrates such as 4.5S RNA. The protein component plays an auxiliary but essential role in vivo by binding to the 5'-leader sequence and broadening the substrate specificity of the ribozyme. The chain is Ribonuclease P protein component from Thermus thermophilus (strain ATCC BAA-163 / DSM 7039 / HB27).